The chain runs to 154 residues: Interleukin-2 (154 aa).

Residues M1–G20 form the signal peptide. T23 carries an O-linked (GalNAc...) threonine glycan. A disulfide bridge links C78 with C126.

This sequence belongs to the IL-2 family.

The protein resides in the secreted. Functionally, cytokine produced by activated CD4-positive helper T-cells and to a lesser extend activated CD8-positive T-cells and natural killer (NK) cells that plays pivotal roles in the immune response and tolerance. Binds to a receptor complex composed of either the high-affinity trimeric IL-2R (IL2RA/CD25, IL2RB/CD122 and IL2RG/CD132) or the low-affinity dimeric IL-2R (IL2RB and IL2RG). Interaction with the receptor leads to oligomerization and conformation changes in the IL-2R subunits resulting in downstream signaling starting with phosphorylation of JAK1 and JAK3. In turn, JAK1 and JAK3 phosphorylate the receptor to form a docking site leading to the phosphorylation of several substrates including STAT5. This process leads to activation of several pathways including STAT, phosphoinositide-3-kinase/PI3K and mitogen-activated protein kinase/MAPK pathways. Functions as a T-cell growth factor and can increase NK-cell cytolytic activity as well. Promotes strong proliferation of activated B-cells and subsequently immunoglobulin production. Plays a pivotal role in regulating the adaptive immune system by controlling the survival and proliferation of regulatory T-cells, which are required for the maintenance of immune tolerance. Moreover, participates in the differentiation and homeostasis of effector T-cell subsets, including Th1, Th2, Th17 as well as memory CD8-positive T-cells. The sequence is that of Interleukin-2 (IL2) from Delphinapterus leucas (Beluga whale).